We begin with the raw amino-acid sequence, 509 residues long: Glycogen synthase (509 aa).

An ADP-alpha-D-glucose-binding site is contributed by Lys47.

This sequence belongs to the glycosyltransferase 1 family. Bacterial/plant glycogen synthase subfamily.

It catalyses the reaction [(1-&gt;4)-alpha-D-glucosyl](n) + ADP-alpha-D-glucose = [(1-&gt;4)-alpha-D-glucosyl](n+1) + ADP + H(+). It functions in the pathway glycan biosynthesis; glycogen biosynthesis. Functionally, synthesizes alpha-1,4-glucan chains using ADP-glucose. The polypeptide is Glycogen synthase (Xanthomonas euvesicatoria pv. vesicatoria (strain 85-10) (Xanthomonas campestris pv. vesicatoria)).